The following is a 390-amino-acid chain: Cold-responsive protein kinase 1 (390 aa).

The region spanning 41-320 is the Protein kinase domain; the sequence is FSAENKIGEG…VRLLTGEKDI (280 aa). Residues 47–55 and K69 each bind ATP; that span reads IGEGGFGSV. Y114 is subject to Phosphotyrosine. D169 acts as the Proton acceptor in catalysis. Phosphoserine is present on residues S173 and S202. Residues T203 and T208 each carry the phosphothreonine modification. Y216 carries the post-translational modification Phosphotyrosine. Residues 345–390 form a disordered region; it reads TKTEQVNRQNYTNPSSSSNGSSRDHSNAYSSGASSANAGNTFSSTI. Residues 354–390 are compositionally biased toward low complexity; the sequence is NYTNPSSSSNGSSRDHSNAYSSGASSANAGNTFSSTI.

Belongs to the protein kinase superfamily. Ser/Thr protein kinase family. In terms of assembly, interacts with and phosphorylates 14-3-3 proteins. Binds to GRF6 at the plasma membrane. Post-translationally, autophosphorylated.

The protein resides in the cell membrane. The catalysed reaction is L-seryl-[protein] + ATP = O-phospho-L-seryl-[protein] + ADP + H(+). It carries out the reaction L-threonyl-[protein] + ATP = O-phospho-L-threonyl-[protein] + ADP + H(+). With respect to regulation, activated by cold. Functionally, negative regulator of freezing tolerance that phosphorylates 14-3-3 proteins (e.g. GRF6) thus triggering their translocation from the cytosol to the nucleus in response to cold stress. This is Cold-responsive protein kinase 1 from Arabidopsis thaliana (Mouse-ear cress).